The following is a 162-amino-acid chain: CASP-like protein 0U1 (162 aa).

The Cytoplasmic segment spans residues 1-11 (MAAVEAAKTPR). A helical membrane pass occupies residues 12–32 (FILLIIEWVFALVAFAVMGHY). The Extracellular portion of the chain corresponds to 33–43 (LFDDRRSSFEY). The chain crosses the membrane as a helical span at residues 44 to 64 (LTAICILVWLVVMIYMVILCC). Residues 65 to 69 (GRALP) lie on the Cytoplasmic side of the membrane. The chain crosses the membrane as a helical span at residues 70–90 (PLIEAAIFLLFAILVFIAFLV). Residues 91-123 (TAVKCNNSETIVIAGQTISRKVCEGESEPKAAA) lie on the Extracellular side of the membrane. Asn96 is a glycosylation site (N-linked (GlcNAc...) asparagine). A helical membrane pass occupies residues 124–144 (AFAFLLGLLLAGSSVLGCIAF). Residues 145 to 162 (RRPSAPPLSSFQNPTSSV) are Cytoplasmic-facing.

This sequence belongs to the Casparian strip membrane proteins (CASP) family. Homodimer and heterodimers.

It localises to the cell membrane. In Chlorokybus atmophyticus (Soil alga), this protein is CASP-like protein 0U1.